The primary structure comprises 763 residues: MAP7 domain-containing protein 2 (763 aa).

A compositionally biased stretch (gly residues) spans 1–11 (MERSGGNGAGA). 3 disordered regions span residues 1 to 72 (MERS…REKC), 102 to 127 (LEEQ…LREE), and 140 to 531 (ERTQ…KAMI). The segment covering 12 to 31 (RAGAPSEGAAKGSSLLSAKS) has biased composition (low complexity). Basic and acidic residues predominate over residues 53-72 (LKSDERQRLAKERREEREKC). Polar residues-rich tracts occupy residues 184 to 212 (PSDT…NLPK) and 241 to 251 (LKSSYKSSPTR). Positions 312–321 (KRSSSPVKSK) are enriched in low complexity. Composition is skewed to basic and acidic residues over residues 354–372 (ETLK…KEGA), 381–420 (PREE…EHSA), and 437–531 (LAEK…KAMI). A coiled-coil region spans residues 434–575 (AKILAEKRRQ…QERLERKKRI (142 aa)).

It belongs to the MAP7 family. As to quaternary structure, interacts (via N-terminus) with microtubules; facilitates microtubule stabilization. Interacts with kinesin-1 family members, KIF5A, KIF5B and KIF5C. Detected only in the brain and testis (at the protein level).

It localises to the cytoplasm. The protein resides in the cytoskeleton. It is found in the microtubule organizing center. The protein localises to the centrosome. Its subcellular location is the cell projection. It localises to the axon. In terms of biological role, microtubule-stabilizing protein involved in the control of cell motility and neurite outgrowth. Acts as a critical cofactor for kinesin transport; in the proximal axon regulates kinesin-1 family members, KIF5A, KIF5B and KIF5C recruitment to microtubules and contributes to kinesin-1-mediated transport in the axons. This is MAP7 domain-containing protein 2 (Map7d2) from Rattus norvegicus (Rat).